The following is a 948-amino-acid chain: MSFNKLESFSNKEVIREEVSILTDLLTDVTRKILSPETFEKIAMMEDLAVHSKYQELKEIVEELTTEEMVYISRYFSILPLLINISEDVDLAYEINHQNNIDQDYLGKLSTTIDLISTRENAKEILENLNVVPVLTAHPTQVQRKTMLDLTNHIHTLLRQHRDVKAGLVNEKKWLGNLRRYIELMMQTDMIRDKKLKVTNEITNVMEYYNSSFLQAITNFMVEYKRLAEERGIKLDNPKPITMGMWIGGDRDGNPFVTAETLKLSATLQSEVILNYYIDKVYTLYRTFSLSTNLSETSQAVAEMAALSTDKSVYRENEPYRRAFHYIQSKLIQTLLYLKEGNFSNEGQRLTDRAEKTLSAKTTPSLSNKGREIIPNYIQSRISETLTELKKEETPSYKTAKEFKEDLQVIYDSLIEHHGEALVTGDLTELLQAVDVFGFFLASIDMRQDSSVHEACVAELLASANIVKDYSSLSEEEKCQVLLKQLLEDPRILSATHEPKSELLQKELEIFKTARQLKDALGEEVIKQNIISHSTSVSDLLELAIMLKEVGLIDENGTRVQIVPLFETIEDLDNSCETMEKYLSLPIAQKWIASKNNYQEIMLGYSDSNKDGGYLSSCWTLYKAQQQLTAIGDKFGVKITFFHGRGGTVGRGGGPTYEAITSQPLRSINDRIRLTEQGEVIGNKYGNKDAAYYNLEMLVSAAINRMVTHKKSDAHTSNKYERIMDQVVERSYQIYRDLVFGDERFYDYFFESSPIKAISSFNIGSRPAARKTITEIGGLRAIPWVFSWSQSRVMFPGWYGVGSSFKEFIDQDPENNLAFLQLMYKRWPFFKSLLSNVDMVLSKSNMNIAFEYAQLCEDQNVRDIFNIILDEWQLTKNVILEIEGHDELLAENTYLRDSLDYRMPYFNVLNYIQLELIKRQRNGQLTPDQEKLIHITINGIATGLRNSG.

Active-site residues include histidine 138 and lysine 610.

This sequence belongs to the PEPCase type 1 family. Mg(2+) serves as cofactor.

It carries out the reaction oxaloacetate + phosphate = phosphoenolpyruvate + hydrogencarbonate. Its function is as follows. Forms oxaloacetate, a four-carbon dicarboxylic acid source for the tricarboxylic acid cycle. The sequence is that of Phosphoenolpyruvate carboxylase from Streptococcus gordonii (strain Challis / ATCC 35105 / BCRC 15272 / CH1 / DL1 / V288).